The following is a 474-amino-acid chain: Bifunctional protein HldE (474 aa).

The interval 1–318 is ribokinase; it reads MKLSMPRFDQ…RAIQREEGSE (318 aa). 194 to 197 lines the ATP pocket; that stretch reads NLSE. D263 is an active-site residue. Positions 343-474 are cytidylyltransferase; it reads FTNGCFDILH…AIVEKIRGQG (132 aa).

The protein in the N-terminal section; belongs to the carbohydrate kinase PfkB family. This sequence in the C-terminal section; belongs to the cytidylyltransferase family. In terms of assembly, homodimer.

The enzyme catalyses D-glycero-beta-D-manno-heptose 7-phosphate + ATP = D-glycero-beta-D-manno-heptose 1,7-bisphosphate + ADP + H(+). It carries out the reaction D-glycero-beta-D-manno-heptose 1-phosphate + ATP + H(+) = ADP-D-glycero-beta-D-manno-heptose + diphosphate. Its pathway is nucleotide-sugar biosynthesis; ADP-L-glycero-beta-D-manno-heptose biosynthesis; ADP-L-glycero-beta-D-manno-heptose from D-glycero-beta-D-manno-heptose 7-phosphate: step 1/4. The protein operates within nucleotide-sugar biosynthesis; ADP-L-glycero-beta-D-manno-heptose biosynthesis; ADP-L-glycero-beta-D-manno-heptose from D-glycero-beta-D-manno-heptose 7-phosphate: step 3/4. Its function is as follows. Catalyzes the phosphorylation of D-glycero-D-manno-heptose 7-phosphate at the C-1 position to selectively form D-glycero-beta-D-manno-heptose-1,7-bisphosphate. In terms of biological role, catalyzes the ADP transfer from ATP to D-glycero-beta-D-manno-heptose 1-phosphate, yielding ADP-D-glycero-beta-D-manno-heptose. This chain is Bifunctional protein HldE, found in Pseudomonas syringae pv. tomato (strain ATCC BAA-871 / DC3000).